The following is an 81-amino-acid chain: Sulfur carrier protein TusA (81 aa).

Residue Cys-19 is the Cysteine persulfide intermediate of the active site.

The protein belongs to the sulfur carrier protein TusA family. Interacts with IscS.

The protein localises to the cytoplasm. It functions in the pathway tRNA modification. Functionally, sulfur carrier protein involved in sulfur trafficking in the cell. Part of a sulfur-relay system required for 2-thiolation during synthesis of 2-thiouridine of the modified wobble base 5-methylaminomethyl-2-thiouridine (mnm(5)s(2)U) in tRNA. Interacts with IscS and stimulates its cysteine desulfurase activity. Accepts an activated sulfur from IscS, which is then transferred to TusD, and thus determines the direction of sulfur flow from IscS to 2-thiouridine formation. Also appears to be involved in sulfur transfer for the biosynthesis of molybdopterin. The sequence is that of Sulfur carrier protein TusA from Salmonella choleraesuis (strain SC-B67).